Reading from the N-terminus, the 141-residue chain is Large ribosomal subunit protein uL11 (141 aa).

It belongs to the universal ribosomal protein uL11 family. As to quaternary structure, part of the ribosomal stalk of the 50S ribosomal subunit. Interacts with L10 and the large rRNA to form the base of the stalk. L10 forms an elongated spine to which L12 dimers bind in a sequential fashion forming a multimeric L10(L12)X complex. Post-translationally, one or more lysine residues are methylated.

Functionally, forms part of the ribosomal stalk which helps the ribosome interact with GTP-bound translation factors. The sequence is that of Large ribosomal subunit protein uL11 from Lacticaseibacillus casei (strain BL23) (Lactobacillus casei).